We begin with the raw amino-acid sequence, 285 residues long: MLYLTKIRNAESEFTGNEQKIADFLRANVSELKSVSSRKMAKQLGISQSSIVKFAQKLGAQGFTELRMALIGEYSASREKTNATALHLHSSITSDDSLEVIARKLNREKEQALEQTCALFDYARLQKIIEVISKAPFIQITGLGGSALVGRDLSFKLMKIGYRVTCEADTHVQATVSQALKKGDVQIAISYSGSKKEIVLCAEVARKQGATVIAITSLTDSPLRRLAHYTLDTVSGETEWRSSSMSTRTAQNSVTDLLFVGLVQLNDVESLKMIERSSELTQRLK.

The 77-residue stretch at 1–77 (MLYLTKIRNA…MALIGEYSAS (77 aa)) folds into the HTH rpiR-type domain. The segment at residues 37 to 56 (SRKMAKQLGISQSSIVKFAQ) is a DNA-binding region (H-T-H motif). The SIS domain occupies 128 to 268 (IIEVISKAPF…FVGLVQLNDV (141 aa)).

As to quaternary structure, homotetramer.

Its pathway is amino-sugar metabolism; N-acetylmuramate degradation [regulation]. Its function is as follows. Represses the expression of the murPQ operon involved in the uptake and degradation of N-acetylmuramic acid (MurNAc). Binds to two adjacent inverted repeats within the operator region. MurNAc 6-phosphate, the substrate of MurQ, is the specific inducer that weakens binding of MurR to the operator. The protein is HTH-type transcriptional regulator MurR of Escherichia coli O7:K1 (strain IAI39 / ExPEC).